We begin with the raw amino-acid sequence, 200 residues long: MSQVKQIQGKALPLVGDDIDTDRIIPARFLRCVTFDGLGEHVFADDRQQQGGNHPFDLSQYQDATVLVVNRNFGCGSSREHAPQAIIKWGIKAIIGESFAEIFLGNCLANGVPCVTAPHGQIADLQQAITADPNLAVNLDLTTAAVTYGDRSFPVILSDGAQQMLLDGQWDTCGQLVQNQGKIAATAEKLPYLHWQTSAA.

Belongs to the LeuD family. LeuD type 1 subfamily. Heterodimer of LeuC and LeuD.

The enzyme catalyses (2R,3S)-3-isopropylmalate = (2S)-2-isopropylmalate. It participates in amino-acid biosynthesis; L-leucine biosynthesis; L-leucine from 3-methyl-2-oxobutanoate: step 2/4. In terms of biological role, catalyzes the isomerization between 2-isopropylmalate and 3-isopropylmalate, via the formation of 2-isopropylmaleate. This is 3-isopropylmalate dehydratase small subunit (leuD) from Synechocystis sp. (strain ATCC 27184 / PCC 6803 / Kazusa).